Consider the following 330-residue polypeptide: Beta-ketoacyl-[acyl-carrier-protein] synthase III 2 (330 aa).

Active-site residues include Cys-118 and His-246. Residues 247-251 are ACP-binding; that stretch reads QANLR. Residue Asn-276 is part of the active site.

Belongs to the thiolase-like superfamily. FabH family. As to quaternary structure, homodimer.

It localises to the cytoplasm. It carries out the reaction malonyl-[ACP] + acetyl-CoA + H(+) = 3-oxobutanoyl-[ACP] + CO2 + CoA. Its pathway is lipid metabolism; fatty acid biosynthesis. Its function is as follows. Catalyzes the condensation reaction of fatty acid synthesis by the addition to an acyl acceptor of two carbons from malonyl-ACP. Catalyzes the first condensation reaction which initiates fatty acid synthesis and may therefore play a role in governing the total rate of fatty acid production. Possesses both acetoacetyl-ACP synthase and acetyl transacylase activities. Its substrate specificity determines the biosynthesis of branched-chain and/or straight-chain of fatty acids. This chain is Beta-ketoacyl-[acyl-carrier-protein] synthase III 2, found in Streptomyces coelicolor (strain ATCC BAA-471 / A3(2) / M145).